Reading from the N-terminus, the 167-residue chain is Insertion element IS1 1 protein InsB (167 aa).

It belongs to the transposase 27 family.

Functionally, absolutely required for transposition of IS1. The protein is Insertion element IS1 1 protein InsB (insB1) of Escherichia coli (strain K12).